A 230-amino-acid polypeptide reads, in one-letter code: Antiholin-like protein LrgB (230 aa).

The next 7 membrane-spanning stretches (helical) occupy residues 5–25 (MTPY…TLLF), 30–50 (GFFL…FLKV), 61–81 (GGKM…IPLY), 92–112 (WQIL…VFIV), 149–169 (ITSF…ALFL), 177–197 (PIAK…AVGI), and 209–229 (IAVT…MPFI).

Belongs to the CidB/LrgB family. LrgB subfamily.

It localises to the cell membrane. Inhibits the expression or activity of extracellular murein hydrolases by interacting, possibly with LrgA, with the holin-like protein CidA. The LrgAB and CidA proteins may affect the proton motive force of the membrane. May be involved in programmed cell death (PCD), possibly triggering PCD in response to antibiotics and environmental stresses. This chain is Antiholin-like protein LrgB, found in Bacillus cereus (strain Q1).